Consider the following 627-residue polypeptide: Chaperone protein DnaK (627 aa).

Threonine 197 carries the post-translational modification Phosphothreonine; by autocatalysis. The segment covering 602-611 has biased composition (polar residues); it reads ENQHSEANTV. The tract at residues 602–627 is disordered; that stretch reads ENQHSEANTVNDEKVVDADFQDVDKK. A compositionally biased stretch (basic and acidic residues) spans 612-627; the sequence is NDEKVVDADFQDVDKK.

It belongs to the heat shock protein 70 family.

In terms of biological role, acts as a chaperone. The chain is Chaperone protein DnaK from Rickettsia felis (strain ATCC VR-1525 / URRWXCal2) (Rickettsia azadi).